A 143-amino-acid chain; its full sequence is Small ribosomal subunit protein uS12 (143 aa).

The segment covering 1–15 (MGKCRGLRTARKLRD) has biased composition (basic residues). Residues 1–27 (MGKCRGLRTARKLRDHRREQKWHDKQY) are disordered. Positions 16 to 27 (HRREQKWHDKQY) are enriched in basic and acidic residues.

It belongs to the universal ribosomal protein uS12 family. As to quaternary structure, component of the 40S small ribosomal subunit.

The protein resides in the cytoplasm. Its subcellular location is the cytosol. It is found in the rough endoplasmic reticulum. This Ictalurus punctatus (Channel catfish) protein is Small ribosomal subunit protein uS12 (rps23).